Consider the following 202-residue polypeptide: Putative NADH dehydrogenase/NAD(P)H nitroreductase SCO7141 (202 aa).

This sequence belongs to the nitroreductase family. HadB/RutE subfamily. FMN serves as cofactor.

The chain is Putative NADH dehydrogenase/NAD(P)H nitroreductase SCO7141 from Streptomyces coelicolor (strain ATCC BAA-471 / A3(2) / M145).